We begin with the raw amino-acid sequence, 506 residues long: Cobyric acid synthase (506 aa).

Positions 251–448 (DITIAIVQLP…LHGLFDSDAF (198 aa)) constitute a GATase cobBQ-type domain. Cys-332 serves as the catalytic Nucleophile. His-440 is an active-site residue.

This sequence belongs to the CobB/CobQ family. CobQ subfamily.

Its pathway is cofactor biosynthesis; adenosylcobalamin biosynthesis. Its function is as follows. Catalyzes amidations at positions B, D, E, and G on adenosylcobyrinic A,C-diamide. NH(2) groups are provided by glutamine, and one molecule of ATP is hydrogenolyzed for each amidation. The polypeptide is Cobyric acid synthase (Salmonella choleraesuis (strain SC-B67)).